The following is a 236-amino-acid chain: Small ribosomal subunit protein uS2c (236 aa).

Belongs to the universal ribosomal protein uS2 family.

It localises to the plastid. The protein localises to the chloroplast. This chain is Small ribosomal subunit protein uS2c (rps2), found in Agrostis stolonifera (Creeping bentgrass).